The following is a 487-amino-acid chain: Glutamyl-tRNA(Gln) amidotransferase subunit A (487 aa).

Residues Lys-79 and Ser-158 each act as charge relay system in the active site. Ser-182 serves as the catalytic Acyl-ester intermediate.

This sequence belongs to the amidase family. GatA subfamily. As to quaternary structure, heterotrimer of A, B and C subunits.

The catalysed reaction is L-glutamyl-tRNA(Gln) + L-glutamine + ATP + H2O = L-glutaminyl-tRNA(Gln) + L-glutamate + ADP + phosphate + H(+). Functionally, allows the formation of correctly charged Gln-tRNA(Gln) through the transamidation of misacylated Glu-tRNA(Gln) in organisms which lack glutaminyl-tRNA synthetase. The reaction takes place in the presence of glutamine and ATP through an activated gamma-phospho-Glu-tRNA(Gln). In Ehrlichia canis (strain Jake), this protein is Glutamyl-tRNA(Gln) amidotransferase subunit A.